The primary structure comprises 227 residues: MGNCVGRQRRERPAAPGHPRKRAGRNEPLKKERLKWKSDYPMTDGQLRSKRDEFWDTAPAFEGRKEIWDALKAAAYAAEANDHELAQAILDGASITLPHGTLCECYDELGNRYQLPIYCLSPPVNLLLEHTEEESLEPPEPTPSVRREFPLKVRLSTGKDVRLNASLPDTVGQLKRQLHSQEGIEPSWQRWFFSGKLLTDRTRLQETKIQKDFVIQVIINQPPPPQD.

Residues 1-42 are disordered; the sequence is MGNCVGRQRRERPAAPGHPRKRAGRNEPLKKERLKWKSDYPM. Over residues 24–38 the composition is skewed to basic and acidic residues; the sequence is GRNEPLKKERLKWKS. Positions 149-224 constitute a Ubiquitin-like domain; that stretch reads FPLKVRLSTG…IQVIINQPPP (76 aa).

In terms of assembly, interacts with UBTD1.

May be involved in the regulation of cellular senescence through a positive feedback loop with TP53. Is a TP53 downstream target gene that increases the stability of TP53 protein by promoting the ubiquitination and degradation of MDM2. In Mus musculus (Mouse), this protein is Ubiquitin domain-containing protein 1 (Ubtd1).